Reading from the N-terminus, the 166-residue chain is Ribonuclease P protein component (166 aa).

The protein belongs to the RnpA family. In terms of assembly, consists of a catalytic RNA component (M1 or rnpB) and a protein subunit.

It carries out the reaction Endonucleolytic cleavage of RNA, removing 5'-extranucleotides from tRNA precursor.. Functionally, RNaseP catalyzes the removal of the 5'-leader sequence from pre-tRNA to produce the mature 5'-terminus. It can also cleave other RNA substrates such as 4.5S RNA. The protein component plays an auxiliary but essential role in vivo by binding to the 5'-leader sequence and broadening the substrate specificity of the ribozyme. The polypeptide is Ribonuclease P protein component (Helicobacter pylori (strain HPAG1)).